A 381-amino-acid polypeptide reads, in one-letter code: Cytochrome b (381 aa).

4 consecutive transmembrane segments (helical) span residues 34–54 (FGSLLGLCLIIQILTGLFLAM), 78–99 (WLIRNIHANGASLFFICVYLHI), 114–134 (WNIGVILLFLLMATAFVGYVL), and 179–199 (FFAFHFLLPFLILALTIIHLL). Heme b contacts are provided by histidine 84 and histidine 98. Heme b is bound by residues histidine 183 and histidine 197. Histidine 202 serves as a coordination point for a ubiquinone. The next 4 helical transmembrane spans lie at 227-247 (YKDLLGFFVMIFFLAVFALFM), 289-309 (LGGVLALLFSIFILMLVPLLH), 321-341 (MTQIFFWLLVANSIILTWIGG), and 348-368 (FIMVGQIASISYFSLFLIIMP).

It belongs to the cytochrome b family. In terms of assembly, the cytochrome bc1 complex contains 3 respiratory subunits (MT-CYB, CYC1 and UQCRFS1), 2 core proteins (UQCRC1 and UQCRC2) and probably 6 low-molecular weight proteins. Heme b is required as a cofactor.

The protein resides in the mitochondrion inner membrane. In terms of biological role, component of the ubiquinol-cytochrome c reductase complex (complex III or cytochrome b-c1 complex) that is part of the mitochondrial respiratory chain. The b-c1 complex mediates electron transfer from ubiquinol to cytochrome c. Contributes to the generation of a proton gradient across the mitochondrial membrane that is then used for ATP synthesis. The polypeptide is Cytochrome b (mt-cyb) (Carcharhinus plumbeus (Sandbar shark)).